Consider the following 845-residue polypeptide: Translation initiation factor IF-2 (845 aa).

The segment at 1–260 (MSDEQDKPTL…HMTSSGPREK (260 aa)) is disordered. Residues 68 to 81 (APAPAPAAPRPAAP) are compositionally biased toward pro residues. The segment covering 101–140 (REAEEARMAALEENRRREEAERARAAEEERARAEKREEQA) has biased composition (basic and acidic residues). Low complexity-rich tracts occupy residues 141–166 (ATKAPEPAPTPAASAPDATAADAPPA) and 173–191 (TAARPATASAAPAPRRFTP). Over residues 194–215 (ALKRPEPKRPEPKASRGGENRR) the composition is skewed to basic and acidic residues. A tr-type G domain is found at 344 to 514 (PRAPVVTIMG…ALQAEIMELK (171 aa)). Residues 353–360 (GHVDHGKT) form a G1 region. Residue 353–360 (GHVDHGKT) coordinates GTP. Residues 378-382 (GITQH) form a G2 region. The interval 400-403 (DTPG) is G3. Residues 400–404 (DTPGH) and 454–457 (NKVD) contribute to the GTP site. Positions 454-457 (NKVD) are G4. The tract at residues 490–492 (SAL) is G5.

Belongs to the TRAFAC class translation factor GTPase superfamily. Classic translation factor GTPase family. IF-2 subfamily.

The protein resides in the cytoplasm. Functionally, one of the essential components for the initiation of protein synthesis. Protects formylmethionyl-tRNA from spontaneous hydrolysis and promotes its binding to the 30S ribosomal subunits. Also involved in the hydrolysis of GTP during the formation of the 70S ribosomal complex. The sequence is that of Translation initiation factor IF-2 from Sphingopyxis alaskensis (strain DSM 13593 / LMG 18877 / RB2256) (Sphingomonas alaskensis).